We begin with the raw amino-acid sequence, 555 residues long: Protein NRT1/ PTR FAMILY 5.12 (555 aa).

Transmembrane regions (helical) follow at residues 53–73 and 83–103; these read FAYF…LGES and LWLG…DSFL. Residue Thr108 is modified to Phosphothreonine. 10 helical membrane passes run 109–129, 148–168, 190–210, 221–241, 315–335, 357–377, 401–421, 443–463, 482–502, and 526–546; these read ILLT…SATI, VIIF…FKVC, SYFN…RLVT, LGYA…LLGI, AVLS…VFAQ, VPAA…IPIY, ISTG…VEMK, VCWL…TMVG, ALYL…VSVI, and YFYW…VYFA.

It belongs to the major facilitator superfamily. Proton-dependent oligopeptide transporter (POT/PTR) (TC 2.A.17) family. Expressed in shoots and roots.

The protein localises to the membrane. This Arabidopsis thaliana (Mouse-ear cress) protein is Protein NRT1/ PTR FAMILY 5.12 (NPF5.12).